The sequence spans 124 residues: Ribonuclease pancreatic (124 aa).

The segment covering 1-13 (KESAAAKFERQHI) has biased composition (basic and acidic residues). The segment at 1 to 23 (KESAAAKFERQHIDSSTSSVSSS) is disordered. Substrate-binding residues include Lys7 and Arg10. The active-site Proton acceptor is His12. 4 disulfide bridges follow: Cys26–Cys84, Cys40–Cys95, Cys58–Cys110, and Cys65–Cys72. The N-linked (GlcNAc...) asparagine glycan is linked to Asn34. Substrate contacts are provided by residues 41–45 (KPVNT), Lys66, and Arg85. The Proton donor role is filled by His119.

Belongs to the pancreatic ribonuclease family. As to quaternary structure, monomer. Interacts with and forms tight 1:1 complexes with RNH1. Dimerization of two such complexes may occur. Interaction with RNH1 inhibits this protein. Pancreas.

It localises to the secreted. The catalysed reaction is an [RNA] containing cytidine + H2O = an [RNA]-3'-cytidine-3'-phosphate + a 5'-hydroxy-ribonucleotide-3'-[RNA].. The enzyme catalyses an [RNA] containing uridine + H2O = an [RNA]-3'-uridine-3'-phosphate + a 5'-hydroxy-ribonucleotide-3'-[RNA].. Functionally, endonuclease that catalyzes the cleavage of RNA on the 3' side of pyrimidine nucleotides. Acts on single-stranded and double-stranded RNA. This chain is Ribonuclease pancreatic (RNASE1), found in Giraffa camelopardalis (Giraffe).